A 264-amino-acid polypeptide reads, in one-letter code: Glutamate racemase (264 aa).

Residues 10–11 (DS) and 42–43 (YG) contribute to the substrate site. Cys-73 acts as the Proton donor/acceptor in catalysis. Substrate is bound at residue 74-75 (NT). The Proton donor/acceptor role is filled by Cys-183. 184-185 (TH) contributes to the substrate binding site.

This sequence belongs to the aspartate/glutamate racemases family.

It catalyses the reaction L-glutamate = D-glutamate. It functions in the pathway cell wall biogenesis; peptidoglycan biosynthesis. In terms of biological role, provides the (R)-glutamate required for cell wall biosynthesis. In Streptococcus agalactiae serotype Ia (strain ATCC 27591 / A909 / CDC SS700), this protein is Glutamate racemase.